We begin with the raw amino-acid sequence, 423 residues long: Large ribosomal subunit protein mL37 (423 aa).

The transit peptide at 1-29 (MALASGPAMRALAGSARLGLGGYGAPKRG) directs the protein to the mitochondrion.

It belongs to the mitochondrion-specific ribosomal protein mL37 family. As to quaternary structure, component of the mitochondrial ribosome large subunit (39S) which comprises a 16S rRNA and about 50 distinct proteins.

The protein localises to the mitochondrion. The protein is Large ribosomal subunit protein mL37 (Mrpl37) of Rattus norvegicus (Rat).